The sequence spans 365 residues: 3-isopropylmalate dehydrogenase (365 aa).

78-91 (GYKWDSLPRSQRPE) is a binding site for NAD(+). Positions 98, 108, 136, and 226 each coordinate substrate. Mg(2+)-binding residues include Asp-226, Asp-250, and Asp-254. Position 284–296 (284–296 (GSAPDIAGQDKAN)) interacts with NAD(+).

It belongs to the isocitrate and isopropylmalate dehydrogenases family. LeuB type 1 subfamily. Homodimer. It depends on Mg(2+) as a cofactor. Mn(2+) serves as cofactor.

The protein resides in the cytoplasm. It carries out the reaction (2R,3S)-3-isopropylmalate + NAD(+) = 4-methyl-2-oxopentanoate + CO2 + NADH. It participates in amino-acid biosynthesis; L-leucine biosynthesis; L-leucine from 3-methyl-2-oxobutanoate: step 3/4. Catalyzes the oxidation of 3-carboxy-2-hydroxy-4-methylpentanoate (3-isopropylmalate) to 3-carboxy-4-methyl-2-oxopentanoate. The product decarboxylates to 4-methyl-2 oxopentanoate. This is 3-isopropylmalate dehydrogenase from Synechococcus elongatus (strain ATCC 33912 / PCC 7942 / FACHB-805) (Anacystis nidulans R2).